We begin with the raw amino-acid sequence, 56 residues long: UPF0339 protein NMA1193/NMA1859 (56 aa).

The protein belongs to the UPF0339 family.

The sequence is that of UPF0339 protein NMA1193/NMA1859 from Neisseria meningitidis serogroup A / serotype 4A (strain DSM 15465 / Z2491).